Reading from the N-terminus, the 446-residue chain is Maltoporin (446 aa).

The N-terminal stretch at 1 to 25 is a signal peptide; that stretch reads MMITLRKLPLAVAVAAGVMSAQAMA.

This sequence belongs to the porin LamB (TC 1.B.3) family. In terms of assembly, homotrimer formed of three 18-stranded antiparallel beta-barrels, containing three independent channels.

The protein localises to the cell outer membrane. The catalysed reaction is beta-maltose(in) = beta-maltose(out). Involved in the transport of maltose and maltodextrins. The chain is Maltoporin from Escherichia coli (strain SE11).